Reading from the N-terminus, the 763-residue chain is Phosphoglycerol transferase I (763 aa).

4 helical membrane-spanning segments follow: residues 4–19 (LLSV…IYAW), 26–48 (WWFA…LYAS), 76–98 (YILP…GWVL), and 110–132 (YSLL…RQIT).

It belongs to the OpgB family.

It is found in the cell inner membrane. The enzyme catalyses a phosphatidylglycerol + a membrane-derived-oligosaccharide D-glucose = a 1,2-diacyl-sn-glycerol + a membrane-derived-oligosaccharide 6-(glycerophospho)-D-glucose.. It functions in the pathway glycan metabolism; osmoregulated periplasmic glucan (OPG) biosynthesis. Its function is as follows. Transfers a phosphoglycerol residue from phosphatidylglycerol to the membrane-bound nascent glucan backbones. This Salmonella typhi protein is Phosphoglycerol transferase I.